The sequence spans 468 residues: Transcription factor ste11 (468 aa).

A disordered region spans residues 1–21 (MSASLTAEQKDQKSSVKRPLN). A DNA-binding region (HMG box) is located at residues 16 to 80 (VKRPLNSFML…KHMLENPEYK (65 aa)). T173 bears the Phosphothreonine mark. S209, S211, and S218 each carry phosphoserine. Composition is skewed to polar residues over residues 249–263 (PSLE…SNCS) and 274–285 (GTVSEQSNSDSP). The interval 249–290 (PSLEANLPQNSSNCSARRVPKFDSKGTVSEQSNSDSPELSAD) is disordered.

In terms of processing, phosphorylation results in inactivation.

It localises to the nucleus. Its subcellular location is the cytoplasm. Its function is as follows. Key transcription factor for sexual development. Activates the transcription of the matp, matm, mei2, mfm, ste6 and rgs1 genes. Binds specifically to a DNA fragment carrying a 10-base motif 5'-TTCTTTGTTY-3'. The sequence is that of Transcription factor ste11 (ste11) from Schizosaccharomyces pombe (strain 972 / ATCC 24843) (Fission yeast).